Reading from the N-terminus, the 73-residue chain is Translation initiation factor IF-1 (73 aa).

An S1-like domain is found at 1 to 73 (MAKKEDTLVL…TKARVVYRHR (73 aa)).

It belongs to the IF-1 family. In terms of assembly, component of the 30S ribosomal translation pre-initiation complex which assembles on the 30S ribosome in the order IF-2 and IF-3, IF-1 and N-formylmethionyl-tRNA(fMet); mRNA recruitment can occur at any time during PIC assembly.

It is found in the cytoplasm. Its function is as follows. One of the essential components for the initiation of protein synthesis. Stabilizes the binding of IF-2 and IF-3 on the 30S subunit to which N-formylmethionyl-tRNA(fMet) subsequently binds. Helps modulate mRNA selection, yielding the 30S pre-initiation complex (PIC). Upon addition of the 50S ribosomal subunit IF-1, IF-2 and IF-3 are released leaving the mature 70S translation initiation complex. The protein is Translation initiation factor IF-1 of Chlamydia pneumoniae (Chlamydophila pneumoniae).